Consider the following 816-residue polypeptide: Nicotine 6-hydroxylase large subunit (816 aa).

Position 745 (Glu-745) interacts with Mo-molybdopterin cytosine dinucleotide.

Belongs to the xanthine dehydrogenase family. Heterotrimer composed of a large subunit (NdhL), a medium subunit (NdhM) and a small subunit (NdhS). Mo-molybdopterin cytosine dinucleotide is required as a cofactor.

It localises to the cytoplasm. The enzyme catalyses (R)-nicotine + A + H2O = (R)-6-hydroxynicotine + AH2. The catalysed reaction is (S)-nicotine + A + H2O = (S)-6-hydroxynicotine + AH2. It participates in alkaloid degradation; nicotine degradation; 6-hydroxypseudooxynicotine from nicotine (R-isomer route): step 1/2. It functions in the pathway alkaloid degradation; nicotine degradation; 6-hydroxypseudooxynicotine from nicotine (S-isomer route): step 1/2. Nicotine dehydrogenase activity is inhibited by tungsten. Functionally, component of the nicotine 6-hydroxylase, which is involved in the degradation of nicotine. Catalyzes the hydroxylation of the pyridine ring at C6 to form 6-hydroxynicotine. Can use both L-nicotine and D-nicotine. This chain is Nicotine 6-hydroxylase large subunit, found in Paenarthrobacter nicotinovorans (Arthrobacter nicotinovorans).